The sequence spans 279 residues: Phosphatidylglycerol--prolipoprotein diacylglyceryl transferase (279 aa).

A run of 4 helical transmembrane segments spans residues 4–24, 44–64, 76–96, and 104–124; these read IGPL…FLGY, VVFW…VLTS, LYIW…GLTF, and GYPL…GIVA. Arginine 126 lines the a 1,2-diacyl-sn-glycero-3-phospho-(1'-sn-glycerol) pocket. A run of 3 helical transmembrane segments spans residues 182-202, 206-226, and 245-265; these read LTQV…LYWL, PFYG…RSVL, and LGIG…LLSL.

Belongs to the Lgt family.

The protein resides in the cell inner membrane. It carries out the reaction L-cysteinyl-[prolipoprotein] + a 1,2-diacyl-sn-glycero-3-phospho-(1'-sn-glycerol) = an S-1,2-diacyl-sn-glyceryl-L-cysteinyl-[prolipoprotein] + sn-glycerol 1-phosphate + H(+). It functions in the pathway protein modification; lipoprotein biosynthesis (diacylglyceryl transfer). In terms of biological role, catalyzes the transfer of the diacylglyceryl group from phosphatidylglycerol to the sulfhydryl group of the N-terminal cysteine of a prolipoprotein, the first step in the formation of mature lipoproteins. This is Phosphatidylglycerol--prolipoprotein diacylglyceryl transferase from Thermus thermophilus (strain ATCC 27634 / DSM 579 / HB8).